Reading from the N-terminus, the 212-residue chain is uncharacterized protein (212 aa).

Pentapeptide repeat domains are found at residues 63-102 (VSFRHIELTDVIFEKCDLSNADFSGAVIHRTSVKQSKMVG), 103-142 (MNVAEATLRNVSFEECHGHFSSFSYSNMKQVRFDHCALMQ), and 143-182 (SECSDTVLQQTHFDGCELEGASFTGTSLQNMDISTCRFEQ).

This is an uncharacterized protein from Bacillus subtilis (strain 168).